Here is a 438-residue protein sequence, read N- to C-terminus: Exoglucanase 3 (438 aa).

A signal peptide spans 1–20 (MFKFAALLALASLVPGFVQA). In terms of domain architecture, CBM1 spans 21–59 (QSPVWGQCGGNGWTGPTTCASGSTCVKQNDFYSQCLPNN). 2 disulfide bridges follow: Cys28–Cys45 and Cys39–Cys55. The segment at 57 to 90 (PNNQAPPSTTTQPGTTPPATTTSGGTGPTSGAGN) is disordered. The interval 60 to 87 (QAPPSTTTQPGTTPPATTTSGGTGPTSG) is linker. Residues 61–79 (APPSTTTQPGTTPPATTTS) are compositionally biased toward low complexity. The interval 88-438 (AGNPYTGKTV…TLVANANPAL (351 aa)) is catalytic. Cystine bridges form between Cys170–Cys229 and Cys360–Cys407. The Proton donor role is filled by Asp215. Asp393 acts as the Nucleophile in catalysis.

The protein belongs to the glycosyl hydrolase 6 (cellulase B) family.

It catalyses the reaction Hydrolysis of (1-&gt;4)-beta-D-glucosidic linkages in cellulose and cellotetraose, releasing cellobiose from the non-reducing ends of the chains.. Functionally, shows enzymatic activity towards crystalline cellulose. At long reaction times. It is also able to degrade carboxymethyl cellulose and barley B-glucan. This chain is Exoglucanase 3 (cel3), found in Agaricus bisporus (White button mushroom).